The following is a 396-amino-acid chain: Pectate lyase 5 (396 aa).

The N-terminal stretch at 1 to 25 (MGIKHCCYILYFTLALVTLLQPVRS) is a signal peptide. An N-linked (GlcNAc...) asparagine glycan is attached at asparagine 36. An intrachain disulfide couples cysteine 53 to cysteine 70. Ca(2+)-binding residues include aspartate 193, aspartate 217, and aspartate 221. Residue arginine 273 is part of the active site.

Belongs to the polysaccharide lyase 1 family. Amb a subfamily. As to quaternary structure, monomer. The cofactor is Ca(2+). The N-terminus is blocked. As to expression, pollen and flowers.

The catalysed reaction is Eliminative cleavage of (1-&gt;4)-alpha-D-galacturonan to give oligosaccharides with 4-deoxy-alpha-D-galact-4-enuronosyl groups at their non-reducing ends.. It functions in the pathway glycan metabolism; pectin degradation; 2-dehydro-3-deoxy-D-gluconate from pectin: step 2/5. Has pectate lyase activity. This is Pectate lyase 5 from Ambrosia artemisiifolia (Common ragweed).